The chain runs to 1001 residues: Serine/threonine-protein kinase TAO1-A (1001 aa).

One can recognise a Protein kinase domain in the interval 28 to 281; the sequence is FSDLREIGHG…SDELLKNMFV (254 aa). Residues 34–42 and K57 contribute to the ATP site; that span reads IGHGSFGAV. D151 (proton acceptor) is an active-site residue. Disordered regions lie at residues 324 to 431 and 567 to 586; these read PAVE…HKSH and KEEL…EWLS. Positions 350–370 are enriched in low complexity; sequence SNQSIPSMSISASSQSSSVTS. 2 stretches are compositionally biased toward basic and acidic residues: residues 375-388 and 577-586; these read SDDK…EGDH and PKKEKQEWLS. Coiled coils occupy residues 458–651 and 754–877; these read SELR…EHAM and KAVL…EIEA. The tract at residues 911–1001 is disordered; sequence SHNPTGGPGP…ISNGSRMSYT (91 aa). A compositionally biased stretch (low complexity) spans 921-930; that stretch reads HWGHPMAGPP. Composition is skewed to polar residues over residues 949–967 and 974–1001; these read GSVQ…NSPQ and SGGQ…MSYT.

It belongs to the protein kinase superfamily. STE Ser/Thr protein kinase family. STE20 subfamily.

It is found in the cytoplasm. The catalysed reaction is L-seryl-[protein] + ATP = O-phospho-L-seryl-[protein] + ADP + H(+). It carries out the reaction L-threonyl-[protein] + ATP = O-phospho-L-threonyl-[protein] + ADP + H(+). Functionally, serine/threonine-protein kinase involved in various processes such as p38/mapk14 stress-activated MAPK cascade, DNA damage response and regulation of cytoskeleton stability. Acts as an activator of the p38/MAPK14 stress-activated MAPK cascade by mediating phosphorylation and subsequent activation of upstream MAP kinase kinases. In response to DNA damage, involved in the G2/M transition DNA damage checkpoint by activating the p38/MAPK14 stress-activated MAPK cascade. The chain is Serine/threonine-protein kinase TAO1-A (taok1-a) from Xenopus laevis (African clawed frog).